Reading from the N-terminus, the 588-residue chain is Aspartate--tRNA ligase (588 aa).

Glutamate 177 lines the L-aspartate pocket. The tract at residues 201–204 (QLFK) is aspartate. Arginine 223 contacts L-aspartate. Residues 223–225 (RDE) and glutamine 232 contribute to the ATP site. Histidine 451 lines the L-aspartate pocket. Glutamate 485 serves as a coordination point for ATP. Arginine 492 serves as a coordination point for L-aspartate. An ATP-binding site is contributed by 537–540 (GLDR).

This sequence belongs to the class-II aminoacyl-tRNA synthetase family. Type 1 subfamily. As to quaternary structure, homodimer.

It localises to the cytoplasm. It catalyses the reaction tRNA(Asp) + L-aspartate + ATP = L-aspartyl-tRNA(Asp) + AMP + diphosphate. Catalyzes the attachment of L-aspartate to tRNA(Asp) in a two-step reaction: L-aspartate is first activated by ATP to form Asp-AMP and then transferred to the acceptor end of tRNA(Asp). This is Aspartate--tRNA ligase from Staphylococcus aureus (strain Newman).